Consider the following 101-residue polypeptide: Urinary protein 3 (101 aa).

Positions Met1–Ala21 are cleaved as a signal peptide. Residues Leu22–Val99 enclose the UPAR/Ly6 domain. 5 cysteine pairs are disulfide-bonded: Cys24-Cys51, Cys27-Cys36, Cys43-Cys70, Cys73-Cys89, and Cys90-Cys96.

It localises to the secreted. The sequence is that of Urinary protein 3 from Rattus norvegicus (Rat).